We begin with the raw amino-acid sequence, 743 residues long: Fork head transcription factor 1 (743 aa).

The 56-residue stretch at 39 to 94 (VTMGRKASNSSDCDVHLGDTKAISRQHAKIFYSFPNQRFEISVMGKNGAFVDGEFV) folds into the FHA domain. Disordered stretches follow at residues 214 to 291 (QPPK…ATQK), 411 to 450 (GISAGKTEQLNPQKETSRSKTHTSRGENVEDRPQSLLQNG), and 529 to 743 (QMQG…SSYT). Positions 221–230 (VSPSSIQRLS) are enriched in polar residues. The segment at residues 291 to 385 (KPNLSYANLI…EGNFFRRTKK (95 aa)) is a DNA-binding region (fork-head). Residues 434-443 (SRGENVEDRP) are compositionally biased toward basic and acidic residues. The span at 529–539 (QMQGPQQVQQQ) shows a compositional bias: low complexity. The segment covering 562–576 (NITSPSPSISVTQRP) has biased composition (polar residues). Low complexity predominate over residues 614-624 (SAGPSSVRSSS). Composition is skewed to polar residues over residues 625-643 (YNSTASESKSEITSHQNLH), 670-686 (TGNQGQRMNSIGNASSF), and 695-726 (ENGSFDTNAKNGNNVDDSSSVRGMNLPSNSSD).

It is found in the nucleus. Acts as a transcriptional activator for ribosomal protein genes (RPG) that contain a HomolE UAS (upstream activating sequence) in addition to a HomolD promoter element; HomolD plays the role of a TATA box in RPG promoters that do not contain a canonical TATA sequence. Binds to HomolE elements with consensus sequence 3'-ACCCTACCCT-5' (or its inverted form AGGGTAGGGT). This Schizosaccharomyces pombe (strain 972 / ATCC 24843) (Fission yeast) protein is Fork head transcription factor 1.